The following is a 145-amino-acid chain: MAEVEQKKKRTFRKFTYRGVDLDQLLDMSYEQLMQLYSARQRRRLSRGLRRKQHSLLKRLRKAKKEAPPMEKPEVVKTHLRDMIILPEMVGSMVGVYNGKTFNQVEIKPEMIGHYLGEFSITYKPVKHGRPGIGATHSSRFIPLK.

Residue Ala-2 is modified to N-acetylalanine. Lys-108 is covalently cross-linked (Glycyl lysine isopeptide (Lys-Gly) (interchain with G-Cter in SUMO2)).

Belongs to the universal ribosomal protein uS19 family. As to quaternary structure, component of the small ribosomal subunit.

Its subcellular location is the cytoplasm. Its function is as follows. Component of the small ribosomal subunit. The ribosome is a large ribonucleoprotein complex responsible for the synthesis of proteins in the cell. This chain is Small ribosomal subunit protein uS19 (RPS15), found in Oryctolagus cuniculus (Rabbit).